A 353-amino-acid chain; its full sequence is Photosystem II D2 protein (353 aa).

Thr-2 bears the N-acetylthreonine mark. The residue at position 2 (Thr-2) is a Phosphothreonine. A helical transmembrane segment spans residues 41-61 (CAYFALGGWFTGTTFVTSWYT). His-118 provides a ligand contact to chlorophyll a. A helical membrane pass occupies residues 125 to 141 (GFMLRQFELARPVQLRP). Pheophytin a contacts are provided by Gln-130 and Asn-143. A helical transmembrane segment spans residues 153–166 (VFLSVFLIYPLGQS). His-198 contributes to the chlorophyll a binding site. A helical membrane pass occupies residues 208–228 (AVLLCAIHGATVENTLFEDGD). A plastoquinone-binding residues include His-215 and Phe-262. Fe cation is bound at residue His-215. His-269 lines the Fe cation pocket. A helical transmembrane segment spans residues 279–295 (GLWMSAIGVVGLALNLR).

It belongs to the reaction center PufL/M/PsbA/D family. As to quaternary structure, PSII is composed of 1 copy each of membrane proteins PsbA, PsbB, PsbC, PsbD, PsbE, PsbF, PsbH, PsbI, PsbJ, PsbK, PsbL, PsbM, PsbT, PsbX, PsbY, PsbZ, Psb30/Ycf12, at least 3 peripheral proteins of the oxygen-evolving complex and a large number of cofactors. It forms dimeric complexes. Requires The D1/D2 heterodimer binds P680, chlorophylls that are the primary electron donor of PSII, and subsequent electron acceptors. It shares a non-heme iron and each subunit binds pheophytin, quinone, additional chlorophylls, carotenoids and lipids. There is also a Cl(-1) ion associated with D1 and D2, which is required for oxygen evolution. The PSII complex binds additional chlorophylls, carotenoids and specific lipids. as cofactor. Only phosphorylated in mesophyll cells, phosphorylation increases when cells are grown under high rather than low light regimes (70 vs 900 umol photons/m-2/s).

The protein resides in the plastid. It localises to the chloroplast thylakoid membrane. It catalyses the reaction 2 a plastoquinone + 4 hnu + 2 H2O = 2 a plastoquinol + O2. Photosystem II (PSII) is a light-driven water:plastoquinone oxidoreductase that uses light energy to abstract electrons from H(2)O, generating O(2) and a proton gradient subsequently used for ATP formation. It consists of a core antenna complex that captures photons, and an electron transfer chain that converts photonic excitation into a charge separation. The D1/D2 (PsbA/PsbD) reaction center heterodimer binds P680, the primary electron donor of PSII as well as several subsequent electron acceptors. D2 is needed for assembly of a stable PSII complex. The sequence is that of Photosystem II D2 protein from Zea mays (Maize).